The chain runs to 162 residues: uncharacterized protein (162 aa).

The signal sequence occupies residues 1–21 (MEGIMKKFFALMTLIAGISFS). Positions 32–118 (VIRESKFIAK…KKAELEKMVF (87 aa)) form a coiled coil.

It belongs to the Skp family.

This is an uncharacterized protein from Aquifex aeolicus (strain VF5).